The primary structure comprises 534 residues: Probable protein kinase UbiB (534 aa).

Residues 23-43 (DLLFALPLPWFLLAVRYVLPW) form a helical membrane-spanning segment. The Protein kinase domain occupies 125 to 492 (RFDVDPLASA…WKKRKDDWFL (368 aa)). ATP is bound by residues 131–139 (LASASVAQV) and K153. D288 (proton acceptor) is an active-site residue. A run of 2 helical transmembrane segments spans residues 490–510 (WFLR…AIGG) and 512–532 (LNQL…YLIV).

Belongs to the ABC1 family. UbiB subfamily.

Its subcellular location is the cell inner membrane. It participates in cofactor biosynthesis; ubiquinone biosynthesis [regulation]. Functionally, is probably a protein kinase regulator of UbiI activity which is involved in aerobic coenzyme Q (ubiquinone) biosynthesis. The chain is Probable protein kinase UbiB from Pseudomonas fluorescens (strain SBW25).